Consider the following 446-residue polypeptide: Phosphoglucosamine mutase (446 aa).

Residue Ser103 is the Phosphoserine intermediate of the active site. Mg(2+) is bound by residues Ser103, Asp242, Asp244, and Asp246. Ser103 is subject to Phosphoserine.

Belongs to the phosphohexose mutase family. Mg(2+) is required as a cofactor. In terms of processing, activated by phosphorylation.

The catalysed reaction is alpha-D-glucosamine 1-phosphate = D-glucosamine 6-phosphate. In terms of biological role, catalyzes the conversion of glucosamine-6-phosphate to glucosamine-1-phosphate. This Corynebacterium urealyticum (strain ATCC 43042 / DSM 7109) protein is Phosphoglucosamine mutase.